The following is a 553-amino-acid chain: Formate--tetrahydrofolate ligase (553 aa).

62–69 is an ATP binding site; it reads TPAGEGKS.

This sequence belongs to the formate--tetrahydrofolate ligase family.

The enzyme catalyses (6S)-5,6,7,8-tetrahydrofolate + formate + ATP = (6R)-10-formyltetrahydrofolate + ADP + phosphate. It functions in the pathway one-carbon metabolism; tetrahydrofolate interconversion. The protein is Formate--tetrahydrofolate ligase of Pediococcus pentosaceus (strain ATCC 25745 / CCUG 21536 / LMG 10740 / 183-1w).